We begin with the raw amino-acid sequence, 222 residues long: MDEWYGQVAPREKLLKYGAAVLTDAELLAIFLRTGIPGMHVMKMAEYLIETFGSLHGLISADYQTLCAHKGIGASKYSQIQAIGELACRCFSSHLMRESVLLNPGITQKFLQNILSHREREIFLVVFLDNQHRVIRHEEMFTGTISSVEVHPREIVREALKVNAAALILAHNHPSGKAEPSQADRLITTQVIKACSLLDIRVLDHLVVGRGECVSFAERGWL.

The region spanning 100–222 (VLLNPGITQK…CVSFAERGWL (123 aa)) is the MPN domain. Residues H171, H173, and D184 each coordinate Zn(2+). The JAMM motif signature appears at 171-184 (HNHPSGKAEPSQAD).

The protein belongs to the UPF0758 family. YicR subfamily.

The polypeptide is UPF0758 protein YPN_3801 (Yersinia pestis bv. Antiqua (strain Nepal516)).